Here is a 114-residue protein sequence, read N- to C-terminus: Large ribosomal subunit protein uL22 (114 aa).

It belongs to the universal ribosomal protein uL22 family. As to quaternary structure, part of the 50S ribosomal subunit.

Its function is as follows. This protein binds specifically to 23S rRNA; its binding is stimulated by other ribosomal proteins, e.g. L4, L17, and L20. It is important during the early stages of 50S assembly. It makes multiple contacts with different domains of the 23S rRNA in the assembled 50S subunit and ribosome. The globular domain of the protein is located near the polypeptide exit tunnel on the outside of the subunit, while an extended beta-hairpin is found that lines the wall of the exit tunnel in the center of the 70S ribosome. The sequence is that of Large ribosomal subunit protein uL22 from Streptococcus pneumoniae (strain Taiwan19F-14).